Consider the following 42-residue polypeptide: Pelovaterin (42 aa).

Cystine bridges form between C8–C38, C16–C32, and C24–C39.

The protein resides in the secreted. The protein localises to the extracellular space. It localises to the extracellular matrix. In terms of biological role, induces the nucleation and stabilization of vaterite, one of the crystalline polymorphs of calcium carbonate. Exhibits strong antimicrobial activity against Pseudomonas aeruginosa and Proteus vulgaris. The protein is Pelovaterin of Pelodiscus sinensis (Chinese softshell turtle).